Reading from the N-terminus, the 158-residue chain is PRA1 family protein 2 (158 aa).

4 helical membrane passes run 36 to 58 (NLNFYSGNYIAIVAVVLLITLFT), 62 to 79 (LLVAILLLGAIGYYLFFV), 88 to 108 (FAVLTPMIQMVILGVVSVIVI), and 113 to 133 (GLTLFYTTLVSLLFVLAHSAL).

It belongs to the PRA1 family.

The protein localises to the membrane. May act as a general Rab protein regulator. The protein is PRA1 family protein 2 (prafB) of Dictyostelium discoideum (Social amoeba).